The following is a 144-amino-acid chain: Small ribosomal subunit protein eS12z (144 aa).

Position 2 is an N-acetylserine (Ser2).

The protein belongs to the eukaryotic ribosomal protein eS12 family.

The sequence is that of Small ribosomal subunit protein eS12z (RPS12A) from Arabidopsis thaliana (Mouse-ear cress).